A 767-amino-acid polypeptide reads, in one-letter code: Protein ROLLING AND ERECT LEAF 2 (767 aa).

Disordered regions lie at residues methionine 1 to arginine 20, proline 78 to phenylalanine 187, and arginine 201 to valine 309. Pro residues-rich tracts occupy residues alanine 81–serine 90 and alanine 110–valine 126. Positions serine 145–serine 155 are enriched in low complexity. Residues arginine 201–arginine 210 are compositionally biased toward basic and acidic residues. The segment covering glutamate 221–glutamate 232 has biased composition (acidic residues). A compositionally biased stretch (basic and acidic residues) spans threonine 255 to asparagine 264.

In terms of tissue distribution, highly expressed in young leaves and panicles. Expressed at low levels in roots.

It localises to the cell membrane. Involved in the regulation of leaf shape formation. May function by coordinating the expression of genes associated with leaf and bulliform cell development. In Oryza sativa subsp. japonica (Rice), this protein is Protein ROLLING AND ERECT LEAF 2.